Reading from the N-terminus, the 326-residue chain is Vitamin B12 import system permease protein BtuC (326 aa).

A run of 9 helical transmembrane segments spans residues 15 to 35, 61 to 81, 88 to 108, 112 to 132, 146 to 166, 184 to 204, 240 to 260, 274 to 294, and 302 to 322; these read WLLC…CAGE, LAVL…QALF, PGLL…VLLG, LPNW…TLIL, LLAG…AIYF, GGVD…LLWI, GWMV…GLVI, VLLP…DVVA, and ELPI…WLLL.

This sequence belongs to the binding-protein-dependent transport system permease family. FecCD subfamily. In terms of assembly, the complex is composed of two ATP-binding proteins (BtuD), two transmembrane proteins (BtuC) and a solute-binding protein (BtuF).

The protein resides in the cell inner membrane. Functionally, part of the ABC transporter complex BtuCDF involved in vitamin B12 import. Involved in the translocation of the substrate across the membrane. The chain is Vitamin B12 import system permease protein BtuC from Escherichia coli O8 (strain IAI1).